The following is a 277-amino-acid chain: Large ribosomal subunit protein uL2 (277 aa).

The segment at 199–277 is disordered; it reads DHMNTSVGKA…ILISRHKRKK (79 aa). Over residues 209-220 the composition is skewed to basic residues; that stretch reads GRTRWMGRRPHN.

Belongs to the universal ribosomal protein uL2 family. Part of the 50S ribosomal subunit. Forms a bridge to the 30S subunit in the 70S ribosome.

Functionally, one of the primary rRNA binding proteins. Required for association of the 30S and 50S subunits to form the 70S ribosome, for tRNA binding and peptide bond formation. It has been suggested to have peptidyltransferase activity; this is somewhat controversial. Makes several contacts with the 16S rRNA in the 70S ribosome. The chain is Large ribosomal subunit protein uL2 from Nitrobacter winogradskyi (strain ATCC 25391 / DSM 10237 / CIP 104748 / NCIMB 11846 / Nb-255).